Reading from the N-terminus, the 175-residue chain is NADH-ubiquinone oxidoreductase chain 6 (175 aa).

Transmembrane regions (helical) follow at residues 1-21, 25-45, 47-67, 88-108, and 149-169; these read MVTYIVFVLSIIFVISFVGVS, SPIYGGLGLIVGGGAGCGVVL, FGGSFLGLMVFLIYLGGMLVV, VVLGAFILGLVVESLIVIYAL, and YGVWLVIVTGWSLFVSVVIIM.

It belongs to the complex I subunit 6 family. Core subunit of respiratory chain NADH dehydrogenase (Complex I) which is composed of 45 different subunits.

It is found in the mitochondrion inner membrane. The enzyme catalyses a ubiquinone + NADH + 5 H(+)(in) = a ubiquinol + NAD(+) + 4 H(+)(out). In terms of biological role, core subunit of the mitochondrial membrane respiratory chain NADH dehydrogenase (Complex I) which catalyzes electron transfer from NADH through the respiratory chain, using ubiquinone as an electron acceptor. Essential for the catalytic activity and assembly of complex I. In Balaenoptera musculus (Blue whale), this protein is NADH-ubiquinone oxidoreductase chain 6 (MT-ND6).